A 303-amino-acid polypeptide reads, in one-letter code: Heme A synthase (303 aa).

Residues 1–8 lie on the Cytoplasmic side of the membrane; it reads MFGKKNLK. The chain crosses the membrane as a helical span at residues 9 to 29; sequence WLGVVATLMMTFVQLGGALVT. Topologically, residues 30 to 67 are extracellular; the sequence is KTGSADGCGSSWPLCHGALIPEFFPIDTIIELSHRAVS. A disulfide bridge links Cys-37 with Cys-44. The active site involves Glu-60. His-63 contacts heme o. Residues 68–88 traverse the membrane as a helical segment; the sequence is ALSLLMVLWLVITAWKHIGYI. The Cytoplasmic segment spans residues 89–93; that stretch reads KEIKP. Residues 94 to 114 traverse the membrane as a helical segment; sequence LSIISVGFLLLQALIGAAAVI. At 115-125 the chain is on the extracellular side; it reads WQQNDYVLALH. His-125 is a binding site for heme o. A helical membrane pass occupies residues 126–146; sequence FGISLISFSSVFLITLIIFSI. At 147–163 the chain is on the cytoplasmic side; it reads DQKYEADELYIKKPLRR. Residues 164–184 traverse the membrane as a helical segment; it reads LTWLMAIIIYCGVYTGALVRH. The Extracellular segment spans residues 185 to 215; that stretch reads ADASLAYGGWPLPFHDLVPHSEQDWVQLTHR. His-214 contributes to the heme b binding site. Residues 216-236 traverse the membrane as a helical segment; sequence IMAFIVFTIIMITYIHAVKNY. Residues 237 to 244 are Cytoplasmic-facing; it reads PNNRTVHY. A helical transmembrane segment spans residues 245 to 265; that stretch reads GYTAAFILVILQVITGALSIM. At 266–270 the chain is on the extracellular side; it reads TNVNL. A helical membrane pass occupies residues 271–291; it reads LIALFHALFITYLFGMTTYFI. His-276 is a heme b binding site. Over 292 to 303 the chain is Cytoplasmic; sequence MLMLRSVRSDKQ.

This sequence belongs to the COX15/CtaA family. Type 1 subfamily. In terms of assembly, interacts with CtaB. Heme b is required as a cofactor.

It is found in the cell membrane. The enzyme catalyses Fe(II)-heme o + 2 A + H2O = Fe(II)-heme a + 2 AH2. The protein operates within porphyrin-containing compound metabolism; heme A biosynthesis; heme A from heme O: step 1/1. Its function is as follows. Catalyzes the conversion of heme O to heme A by two successive hydroxylations of the methyl group at C8. The first hydroxylation forms heme I, the second hydroxylation results in an unstable dihydroxymethyl group, which spontaneously dehydrates, resulting in the formyl group of heme A. The chain is Heme A synthase from Staphylococcus aureus (strain MSSA476).